Here is a 426-residue protein sequence, read N- to C-terminus: Histidine--tRNA ligase (426 aa).

It belongs to the class-II aminoacyl-tRNA synthetase family. In terms of assembly, homodimer.

The protein resides in the cytoplasm. The catalysed reaction is tRNA(His) + L-histidine + ATP = L-histidyl-tRNA(His) + AMP + diphosphate + H(+). This chain is Histidine--tRNA ligase, found in Streptococcus equi subsp. zooepidemicus (strain MGCS10565).